A 530-amino-acid chain; its full sequence is MHPGRTTGKGPSTHTQIDQQPPRLLIVHIALPSWADICTNLCEALQNFFSLACSLMGPSRMSLFSLYMVQDQHECILPFVQVKGNFARLQTCISELRMLQREGCFRSQGASLRLAVEDGLQQFKQYSRHVTTRAALTYTSLEITILTSQPGKEVVKQLEEGLKDTDLARVRRFQVVEVTKGILEHVDSASPVEDTSNDESSILGTDIDLQTIDNDIVSMEIFFKAWLHNSGTDQEQIHLLLSSQCFSNISRPRDNPMCLKCDLQERLLCPSLLAGTADGSLRMDDPKGDFITLYQMASQSSASHYKLQVIKALKSSGLCESLTYGLPFILRPTSCWQLDWDELETNQQHFHALCHSLLKREWLLLAKGEPPGPGHSQRIPASTFYVIMPSHSLTLLVKAVATRELMLPSTFPLLPEDPHDDSLKNVESMLDSLELEPTYNPLHVQSHLYSHLSSIYAKPQGRLHPHWESRAPRKHPCKTGQLQTNRARATVAPLPMTPVPGRASKMPAASKSSSDAFFLPSEWEKDPSRP.

The segment at 463–530 (LHPHWESRAP…SEWEKDPSRP (68 aa)) is disordered. Residues 503-516 (ASKMPAASKSSSDA) are compositionally biased toward low complexity.

The protein resides in the cytoplasm. Required for meiosis I progression during spermatogenesis. In Homo sapiens (Human), this protein is Meiosis 1 arrest protein (M1AP).